The sequence spans 97 residues: MNCKPLILCTFVAVAMCLVHFGNALPAISHYTHKRFDSMGGIDFVQVCLNNCVQCKTMLGDYFQGQTCALSCLKFKGKAIPDCEDIASIAPFLNALE.

The N-terminal stretch at 1–17 is a signal peptide; sequence MNCKPLILCTFVAVAMC. 3 cysteine pairs are disulfide-bonded: Cys-48–Cys-72, Cys-52–Cys-68, and Cys-55–Cys-83.

Belongs to the insect eclosion hormone family. As to expression, expressed in a single pair of brain neurons which extend their processes the entire length of the central nervous system and also to the corpora cardiaca portion of the ring gland. These cells show massive depletion of immunoreactive Eh at ecdysis.

The protein localises to the secreted. Its function is as follows. Neuropeptide that triggers the performance of ecdysis behaviors at the end of a molt. It triggers adult behavior patterns: larval, pupal and adult ecdysis, and plasticization during the molt. This chain is Eclosion hormone (Eh), found in Drosophila melanogaster (Fruit fly).